The primary structure comprises 156 residues: Putative pre-16S rRNA nuclease (156 aa).

Belongs to the YqgF nuclease family.

Its subcellular location is the cytoplasm. Functionally, could be a nuclease involved in processing of the 5'-end of pre-16S rRNA. The sequence is that of Putative pre-16S rRNA nuclease from Aromatoleum aromaticum (strain DSM 19018 / LMG 30748 / EbN1) (Azoarcus sp. (strain EbN1)).